The sequence spans 365 residues: Protein AC54 (365 aa).

Interacts with C42 and VP80. Interacts with protein 38K.

It is found in the virion. Its function is as follows. Structural protein that participates in nucleocapsid assembly. Plays an essential role in the proper localization of the major capsid protein VP39, and the minor capsid protein 38K into the capsid assembly site. The sequence is that of Protein AC54 (AC54) from Lepidoptera (butterflies and moths).